A 239-amino-acid chain; its full sequence is Chlorate reductase subunit gamma (239 aa).

The N-terminal stretch at 1-27 (MKTNILVKRMAVIGLAVAAACTGAAAA) is a signal peptide. Heme b is bound by residues H74 and M138.

Heterotrimer of alpha, beta and gamma subunits. Heme b serves as cofactor.

It localises to the periplasm. Functionally, may transfer electrons to the iron-sulfur centers of ClrB. This Ideonella dechloratans protein is Chlorate reductase subunit gamma (clrC).